Here is a 1503-residue protein sequence, read N- to C-terminus: DNA-directed RNA polymerase subunit beta' (1503 aa).

Residues C71, C73, C86, and C89 each contribute to the Zn(2+) site. Mg(2+) is bound by residues D470, D472, and D474. Positions 800, 874, 881, and 884 each coordinate Zn(2+).

This sequence belongs to the RNA polymerase beta' chain family. The RNAP catalytic core consists of 2 alpha, 1 beta, 1 beta' and 1 omega subunit. When a sigma factor is associated with the core the holoenzyme is formed, which can initiate transcription. Mg(2+) serves as cofactor. It depends on Zn(2+) as a cofactor.

The catalysed reaction is RNA(n) + a ribonucleoside 5'-triphosphate = RNA(n+1) + diphosphate. In terms of biological role, DNA-dependent RNA polymerase catalyzes the transcription of DNA into RNA using the four ribonucleoside triphosphates as substrates. The polypeptide is DNA-directed RNA polymerase subunit beta' (Sulfurimonas denitrificans (strain ATCC 33889 / DSM 1251) (Thiomicrospira denitrificans (strain ATCC 33889 / DSM 1251))).